Here is a 258-residue protein sequence, read N- to C-terminus: SufE-like protein 2, chloroplastic (258 aa).

The segment at 1–32 (MNTSSSFKALASPPLISTSRPTTKSFPNPRFT) is disordered. Positions 15 to 32 (LISTSRPTTKSFPNPRFT) are enriched in polar residues. Cys122 functions as the Cysteine persulfide intermediate in the catalytic mechanism.

This sequence belongs to the SufE family. As to expression, highly expressed in flowers and pollen, and at low levels in roots, leaves and stems.

It is found in the plastid. The protein resides in the chloroplast. It functions in the pathway cofactor biosynthesis; iron-sulfur cluster biosynthesis. Its function is as follows. Participates in cysteine desulfurization mediated by NFS2. Can activate the cysteine desulfurase activity of NFS2 in vitro. Cysteine desulfurization mobilizes sulfur from L-cysteine to yield L-alanine and supplies the inorganic sulfur for iron-sulfur (Fe-S) cluster formation. In Arabidopsis thaliana (Mouse-ear cress), this protein is SufE-like protein 2, chloroplastic (SUFE2).